Reading from the N-terminus, the 570-residue chain is Periplasmic trehalase (570 aa).

Residues 1–34 form the signal peptide; sequence MIPPEIRRSVLLQKAIKLALAGTLLTFASFSATA. Substrate contacts are provided by residues Arg-159, 166–167, Asn-203, 212–214, 284–286, and Gly-317; these read WD, RSQ, and RPE. Residues Asp-319 and Glu-503 each act as proton donor/acceptor in the active site. Position 518 (Glu-518) interacts with substrate. Residues 544–570 form a disordered region; sequence KPCDSVPSTRPASLSATPTKTPSAATQ. Residues 554 to 570 show a composition bias toward low complexity; that stretch reads PASLSATPTKTPSAATQ.

The protein belongs to the glycosyl hydrolase 37 family. Monomer.

The protein localises to the periplasm. It catalyses the reaction alpha,alpha-trehalose + H2O = alpha-D-glucose + beta-D-glucose. Functionally, provides the cells with the ability to utilize trehalose at high osmolarity by splitting it into glucose molecules that can subsequently be taken up by the phosphotransferase-mediated uptake system. This Salmonella newport (strain SL254) protein is Periplasmic trehalase.